The primary structure comprises 395 residues: Selection and upkeep of intraepithelial T-cells protein 7 (395 aa).

The signal sequence occupies residues 1 to 25 (MMKPEFFCFSGFCVYFLFLQVVVSS). Positions 26 to 141 (EKLRVTTPTR…DAAIMNLNVT (116 aa)) constitute an Ig-like V-type domain. Residues 26-248 (EKLRVTTPTR…FNRDRIWMES (223 aa)) lie on the Extracellular side of the membrane. A disulfide bridge links Cys-49 with Cys-123. Residues Asn-92 and Asn-139 are each glycosylated (N-linked (GlcNAc...) asparagine). An Ig-like C1-type domain is found at 142-233 (AVGLETEIHV…TGEEKQTSII (92 aa)). Residues Cys-163 and Cys-217 are joined by a disulfide bond. A helical membrane pass occupies residues 249–269 (LASIVWIMLSVYILYIICFYW). Over 270-287 (RTGCASGCLSKCFCVVTS) the chain is Cytoplasmic. A helical transmembrane segment spans residues 288–308 (WPVQIVHLLFCTGTFFAIYLP). Residues 309 to 329 (HRSRVSLSDPQFPLYNNWITE) lie on the Extracellular side of the membrane. Residues 330-350 (LLFVILFLTICFALPIILLFI) traverse the membrane as a helical segment. Residues 351–395 (QFQFTSLTKWEKNKDGIMDQPRLGKAHETSSLYRKKTGKSWEQEK) are Cytoplasmic-facing. The tract at residues 371 to 395 (PRLGKAHETSSLYRKKTGKSWEQEK) is disordered.

It belongs to the SKINT family. Expressed in skin, thymus, testis and, to a lower extent, bladder.

The protein localises to the membrane. May act by engaging a cell surface molecule on immature T-cells in the embryonic thymus. The chain is Selection and upkeep of intraepithelial T-cells protein 7 (Skint7) from Mus musculus (Mouse).